A 94-amino-acid polypeptide reads, in one-letter code: Host-modulation protein 11K (94 aa).

In terms of assembly, interacts with host GRB2; this interaction alters host cell environment by modulating host signaling pathways.

It localises to the host cytoplasm. In terms of biological role, enhances viral DNA replication and virion release. Mechansitically, optimizes viral DNA replication by interacting with host GRB2 to inhibit the negative effect of ERK signaling on B19 viral replication. Plays a role in viral infectivity. Induces apoptosis of primary erythroid progenitor cells. The polypeptide is Host-modulation protein 11K (11K) (Human parvovirus B19 (strain HV) (HPV B19)).